Here is a 187-residue protein sequence, read N- to C-terminus: dTTP/UTP pyrophosphatase (187 aa).

Aspartate 64 acts as the Proton acceptor in catalysis.

The protein belongs to the Maf family. YhdE subfamily. A divalent metal cation serves as cofactor.

It localises to the cytoplasm. It catalyses the reaction dTTP + H2O = dTMP + diphosphate + H(+). The catalysed reaction is UTP + H2O = UMP + diphosphate + H(+). Nucleoside triphosphate pyrophosphatase that hydrolyzes dTTP and UTP. May have a dual role in cell division arrest and in preventing the incorporation of modified nucleotides into cellular nucleic acids. The sequence is that of dTTP/UTP pyrophosphatase from Leptospira interrogans serogroup Icterohaemorrhagiae serovar Lai (strain 56601).